The primary structure comprises 263 residues: Tryptophan synthase alpha chain (263 aa).

Residues E51 and D62 each act as proton acceptor in the active site.

It belongs to the TrpA family. In terms of assembly, tetramer of two alpha and two beta chains.

The enzyme catalyses (1S,2R)-1-C-(indol-3-yl)glycerol 3-phosphate + L-serine = D-glyceraldehyde 3-phosphate + L-tryptophan + H2O. It functions in the pathway amino-acid biosynthesis; L-tryptophan biosynthesis; L-tryptophan from chorismate: step 5/5. Functionally, the alpha subunit is responsible for the aldol cleavage of indoleglycerol phosphate to indole and glyceraldehyde 3-phosphate. The protein is Tryptophan synthase alpha chain of Methanosarcina barkeri (strain Fusaro / DSM 804).